The following is a 296-amino-acid chain: tRNA U34 carboxymethyltransferase (296 aa).

Carboxy-S-adenosyl-L-methionine is bound by residues K64, W78, K83, G102, 124-126, 151-152, Y171, and R286; these read DPS and VE.

The protein belongs to the class I-like SAM-binding methyltransferase superfamily. CmoB family. As to quaternary structure, homotetramer.

It carries out the reaction carboxy-S-adenosyl-L-methionine + 5-hydroxyuridine(34) in tRNA = 5-carboxymethoxyuridine(34) in tRNA + S-adenosyl-L-homocysteine + H(+). In terms of biological role, catalyzes carboxymethyl transfer from carboxy-S-adenosyl-L-methionine (Cx-SAM) to 5-hydroxyuridine (ho5U) to form 5-carboxymethoxyuridine (cmo5U) at position 34 in tRNAs. In Sulfurimonas denitrificans (strain ATCC 33889 / DSM 1251) (Thiomicrospira denitrificans (strain ATCC 33889 / DSM 1251)), this protein is tRNA U34 carboxymethyltransferase.